The primary structure comprises 119 residues: Membrane-anchored ubiquitin-fold protein 3 (119 aa).

The Ubiquitin-like domain occupies 8-76 (IEVKFRLFDG…NNRTLAESRV (69 aa)). Position 116 is a cysteine methyl ester (cysteine 116). Cysteine 116 carries S-geranylgeranyl cysteine lipidation. The propeptide at 117–119 (TIL) is removed in mature form.

Its subcellular location is the cell membrane. May serve as docking site to facilitate the association of other proteins to the plasma membrane. The protein is Membrane-anchored ubiquitin-fold protein 3 (MUB3) of Oryza sativa subsp. japonica (Rice).